A 64-amino-acid polypeptide reads, in one-letter code: uncharacterized protein (64 aa).

Residues 1 to 64 form a disordered region; that stretch reads MMITRGWEGW…LDPAISRSSS (64 aa). Residues 16–28 show a composition bias toward gly residues; sequence RGAGTGTGLGGPG.

This is an uncharacterized protein from Homo sapiens (Human).